A 259-amino-acid chain; its full sequence is Small ribosomal subunit protein eS1 (259 aa).

The residue at position 2 (Ala2) is an N-acetylalanine; partial.

This sequence belongs to the eukaryotic ribosomal protein eS1 family. As to quaternary structure, component of the small ribosomal subunit. Mature ribosomes consist of a small (40S) and a large (60S) subunit. The 40S subunit contains about 33 different proteins and 1 molecule of RNA (18S). The 60S subunit contains about 49 different proteins and 3 molecules of RNA (25S, 5.8S and 5S).

It is found in the cytoplasm. The chain is Small ribosomal subunit protein eS1 from Cryptococcus neoformans var. neoformans serotype D (strain B-3501A) (Filobasidiella neoformans).